Reading from the N-terminus, the 186-residue chain is Ribosome-recycling factor (186 aa).

It belongs to the RRF family.

The protein resides in the cytoplasm. Functionally, responsible for the release of ribosomes from messenger RNA at the termination of protein biosynthesis. May increase the efficiency of translation by recycling ribosomes from one round of translation to another. The chain is Ribosome-recycling factor from Paraburkholderia xenovorans (strain LB400).